The chain runs to 822 residues: Probable phosphoketolase (822 aa).

It belongs to the XFP family. Requires thiamine diphosphate as cofactor.

The sequence is that of Probable phosphoketolase from Lactococcus lactis subsp. lactis (strain IL1403) (Streptococcus lactis).